A 379-amino-acid polypeptide reads, in one-letter code: Anhydro-N-acetylmuramic acid kinase (379 aa).

Residue 9–16 (GTSADGVD) coordinates ATP.

It belongs to the anhydro-N-acetylmuramic acid kinase family.

It carries out the reaction 1,6-anhydro-N-acetyl-beta-muramate + ATP + H2O = N-acetyl-D-muramate 6-phosphate + ADP + H(+). Its pathway is amino-sugar metabolism; 1,6-anhydro-N-acetylmuramate degradation. It functions in the pathway cell wall biogenesis; peptidoglycan recycling. In terms of biological role, catalyzes the specific phosphorylation of 1,6-anhydro-N-acetylmuramic acid (anhMurNAc) with the simultaneous cleavage of the 1,6-anhydro ring, generating MurNAc-6-P. Is required for the utilization of anhMurNAc either imported from the medium or derived from its own cell wall murein, and thus plays a role in cell wall recycling. The polypeptide is Anhydro-N-acetylmuramic acid kinase (Prochlorococcus marinus (strain MIT 9211)).